We begin with the raw amino-acid sequence, 155 residues long: Protein-export protein SecB (155 aa).

It belongs to the SecB family. As to quaternary structure, homotetramer, a dimer of dimers. One homotetramer interacts with 1 SecA dimer.

Its subcellular location is the cytoplasm. In terms of biological role, one of the proteins required for the normal export of preproteins out of the cell cytoplasm. It is a molecular chaperone that binds to a subset of precursor proteins, maintaining them in a translocation-competent state. It also specifically binds to its receptor SecA. The polypeptide is Protein-export protein SecB (Albidiferax ferrireducens (strain ATCC BAA-621 / DSM 15236 / T118) (Rhodoferax ferrireducens)).